The primary structure comprises 93 residues: Ribonuclease P protein component 1 (93 aa).

Belongs to the eukaryotic/archaeal RNase P protein component 1 family. In terms of assembly, consists of a catalytic RNA component and at least 4-5 protein subunits.

It is found in the cytoplasm. It catalyses the reaction Endonucleolytic cleavage of RNA, removing 5'-extranucleotides from tRNA precursor.. Its function is as follows. Part of ribonuclease P, a protein complex that generates mature tRNA molecules by cleaving their 5'-ends. The chain is Ribonuclease P protein component 1 from Methanothermobacter thermautotrophicus (strain ATCC 29096 / DSM 1053 / JCM 10044 / NBRC 100330 / Delta H) (Methanobacterium thermoautotrophicum).